Reading from the N-terminus, the 149-residue chain is D-aminoacyl-tRNA deacylase (149 aa).

The Gly-cisPro motif, important for rejection of L-amino acids signature appears at Gly-137–Pro-138.

Belongs to the DTD family. As to quaternary structure, homodimer.

The protein resides in the cytoplasm. The catalysed reaction is glycyl-tRNA(Ala) + H2O = tRNA(Ala) + glycine + H(+). It catalyses the reaction a D-aminoacyl-tRNA + H2O = a tRNA + a D-alpha-amino acid + H(+). In terms of biological role, an aminoacyl-tRNA editing enzyme that deacylates mischarged D-aminoacyl-tRNAs. Also deacylates mischarged glycyl-tRNA(Ala), protecting cells against glycine mischarging by AlaRS. Acts via tRNA-based rather than protein-based catalysis; rejects L-amino acids rather than detecting D-amino acids in the active site. By recycling D-aminoacyl-tRNA to D-amino acids and free tRNA molecules, this enzyme counteracts the toxicity associated with the formation of D-aminoacyl-tRNA entities in vivo and helps enforce protein L-homochirality. This chain is D-aminoacyl-tRNA deacylase, found in Caldicellulosiruptor bescii (strain ATCC BAA-1888 / DSM 6725 / KCTC 15123 / Z-1320) (Anaerocellum thermophilum).